Reading from the N-terminus, the 89-residue chain is UPF0250 protein Bphy_0213 (89 aa).

The protein belongs to the UPF0250 family.

The protein is UPF0250 protein Bphy_0213 of Paraburkholderia phymatum (strain DSM 17167 / CIP 108236 / LMG 21445 / STM815) (Burkholderia phymatum).